Here is a 245-residue protein sequence, read N- to C-terminus: tRNA pseudouridine synthase A 1 (245 aa).

D53 acts as the Nucleophile in catalysis. A substrate-binding site is contributed by Y111.

Belongs to the tRNA pseudouridine synthase TruA family. As to quaternary structure, homodimer.

The catalysed reaction is uridine(38/39/40) in tRNA = pseudouridine(38/39/40) in tRNA. Formation of pseudouridine at positions 38, 39 and 40 in the anticodon stem and loop of transfer RNAs. The protein is tRNA pseudouridine synthase A 1 of Clostridium tetani (strain Massachusetts / E88).